Consider the following 629-residue polypeptide: Long-chain-fatty-acid--AMP ligase FadD32 (629 aa).

ATP-binding positions include 186-191, S341, A345, D468, and R482; that span reads TSGSTR.

Belongs to the ATP-dependent AMP-binding enzyme family. Monomer.

The enzyme catalyses a long-chain fatty acid + holo-[ACP] + ATP = a long-chain fatty acyl-[ACP] + AMP + diphosphate. It catalyses the reaction dodecanoate + ATP + H(+) = dodecanoyl-AMP + diphosphate. It carries out the reaction tetradecanoate + ATP + H(+) = tetradecanoyl-AMP + diphosphate. Its pathway is lipid metabolism; mycolic acid biosynthesis. The acyl-AMP ligase activity is inhibited by the alkylphosphate esters of AMP, adenosine 50-dodecylphosphate (AMPC12) and eicosyl-AMP (AMPC20). Its function is as follows. Involved in the biosynthesis of mycolic acids. Catalyzes the activation of long-chain fatty acids as acyl-adenylates (acyl-AMP), which are then transferred to the phosphopantetheine arm of the polyketide synthase Pks13 for further chain extension. Can use dodecanoate (C12) and tetradecanoate (C14). In Mycobacterium marinum (strain ATCC BAA-535 / M), this protein is Long-chain-fatty-acid--AMP ligase FadD32 (fadD32).